We begin with the raw amino-acid sequence, 61 residues long: Small ribosomal subunit protein uS14 (61 aa).

Positions 24, 27, 40, and 43 each coordinate Zn(2+).

The protein belongs to the universal ribosomal protein uS14 family. Zinc-binding uS14 subfamily. As to quaternary structure, part of the 30S ribosomal subunit. Contacts proteins S3 and S10. The cofactor is Zn(2+).

In terms of biological role, binds 16S rRNA, required for the assembly of 30S particles and may also be responsible for determining the conformation of the 16S rRNA at the A site. This Treponema pallidum (strain Nichols) protein is Small ribosomal subunit protein uS14.